Here is a 440-residue protein sequence, read N- to C-terminus: Chromosome partition protein MukF (440 aa).

Residues 208–236 (LSETSGTLRELQDTLEAAGDKLQANLLRI) are leucine-zipper.

The protein belongs to the MukF family. Interacts, and probably forms a ternary complex, with MukE and MukB via its C-terminal region. The complex formation is stimulated by calcium or magnesium. It is required for an interaction between MukE and MukB.

The protein localises to the cytoplasm. It localises to the nucleoid. Its function is as follows. Involved in chromosome condensation, segregation and cell cycle progression. May participate in facilitating chromosome segregation by condensation DNA from both sides of a centrally located replisome during cell division. Not required for mini-F plasmid partitioning. Probably acts via its interaction with MukB and MukE. Overexpression results in anucleate cells. It has a calcium binding activity. This chain is Chromosome partition protein MukF, found in Shigella boydii serotype 4 (strain Sb227).